Here is a 1133-residue protein sequence, read N- to C-terminus: RNA-dependent RNA polymerase 2 (1133 aa).

Asp-830, Asp-832, and Asp-834 together coordinate Mg(2+).

Belongs to the RdRP family. In terms of assembly, interacts with NRPD1 and SHH1. Associates with Pol IV complex, forming an interpolymerase channel bridging their active sites, through which the Pol IV-generated transcript is handed over to the RDR2 active site after being backtracked, where it is used as the template for double-stranded RNA (dsRNA) synthesis. Interacts with JMJ24.

It is found in the nucleus. It localises to the nucleoplasm. Its subcellular location is the nucleolus. The catalysed reaction is RNA(n) + a ribonucleoside 5'-triphosphate = RNA(n+1) + diphosphate. Its function is as follows. RNA-dependent direct polymerase involved in the production of small interfering RNAs (siRNAs). Binds to single-stranded RNA (ssRNA); engages ssRNAs longer than 7 nucleotides and initiates internal to their 3' ends. Able to transcribe the RNA of an RNA/DNA hybrid, the transcript produced by Pol IV, if its 3' end is accessible, to generate double-stranded small interfering RNAs (dsRNAs) precursor essential for establishing and maintaining DNA methylation. Required for the biogenesis of endogenous siRNAs of 24 nucleotide which derive from heterochromatin and DNA repeats such as transposons or endogenous gene tandem repeats, such as repeats present in FWA gene. Involved in transcriptional gene silencing (TGS). Component of the RNA-directed DNA methylation (RdDM) silencing pathway that utilizes siRNAs to guide DNA methyltransferases to asymmetric cytosines. Involved in control of flowering time through RdDM of FWA locus. Required for reception of long-distance mRNA silencing in the shoot. Required for the formation of telomeric siRNAs and the RNA-dependent DNA methylation of asymmetric cytosines in telomeric (5'-CCCTAAA-3') repeats. This is RNA-dependent RNA polymerase 2 from Arabidopsis thaliana (Mouse-ear cress).